We begin with the raw amino-acid sequence, 251 residues long: Astacin (251 aa).

An N-terminal signal peptide occupies residues 1-15; that stretch reads MQCAVLLVLLGVVAA. Positions 16-49 are cleaved as a propeptide — activation peptide; the sequence is SPIIPEAARALYYNDGMFEGDIKLRAGRQPARVG. Residues 50-248 form the Peptidase M12A domain; that stretch reads AAILGDEYLW…INNLYTNECS (199 aa). Cystine bridges form between cysteine 91-cysteine 247 and cysteine 113-cysteine 133. Zn(2+) is bound at residue histidine 141. Glutamate 142 is an active-site residue. Zn(2+)-binding residues include histidine 145 and histidine 151. Residues 250-251 constitute a propeptide that is removed on maturation; sequence RH.

Monomer. It depends on Zn(2+) as a cofactor.

The enzyme catalyses Hydrolysis of peptide bonds in substrates containing five or more amino acids, preferentially with Ala in P1', and Pro in P2'.. Functionally, metalloprotease. This protease prefers to cleave in front of small aliphatic residues (P1'). The presence of Lys or Arg in the P1 and P2 position yields high-turnover substrates. In the P3 position the enzyme prefers Pro &gt; Val &gt; Leu &gt; Ala &gt; Gly. The chain is Astacin from Astacus astacus (Noble crayfish).